We begin with the raw amino-acid sequence, 324 residues long: Elongation factor Ts, mitochondrial (324 aa).

A mitochondrion-targeting transit peptide spans 1–44 (MSLLRSLRFFPVACTGRSARAVLLQPSQPWHTLHAGPSLSSSAS). Lys-75 and Lys-132 each carry N6-succinyllysine. Ser-269 carries the post-translational modification Phosphoserine.

It belongs to the EF-Ts family.

Its subcellular location is the mitochondrion. In terms of biological role, associates with the EF-Tu.GDP complex and induces the exchange of GDP to GTP. It remains bound to the aminoacyl-tRNA.EF-Tu.GTP complex up to the GTP hydrolysis stage on the ribosome. The protein is Elongation factor Ts, mitochondrial (Tsfm) of Rattus norvegicus (Rat).